The primary structure comprises 65 residues: Large ribosomal subunit protein bL35 (65 aa).

The span at 1-11 (MPKIKTRRSAA) shows a compositional bias: basic residues. 2 disordered regions span residues 1-24 (MPKIKTRRSAAKRFSVTGSGKFKR) and 41-65 (RMRLGQSATVDSTNEKAVRRMMPYA).

It belongs to the bacterial ribosomal protein bL35 family.

The protein is Large ribosomal subunit protein bL35 of Nitratidesulfovibrio vulgaris (strain DSM 19637 / Miyazaki F) (Desulfovibrio vulgaris).